The sequence spans 501 residues: MKKRGVLCEEEKEVKKRKLLEQIGDGHLPYLSSKDDTFYDLWGSCYSKLTLLQAKHVPVDLHHTVQNAFLSLLRNGCLFQDLVRLKGKDIITPVSRILIGRPGYTYKYLNTRLFAVPWINDELNTQYSTRNLLETYKAFSDLNDFLYSQTVNELQKLGKIHKDNFFQHSEYKEQIKSDQRPSTSNYENVKLHSMESFNVTLINYMDPQNMSFLKEEPYFGMGKMAVSWHHDENLVEQSTVAVYNYSYQESSNDVNGEDEDPTRWHVGLKIAWDIETPGLLMPLSSGDCYLMLDDLNKTHQHCVIAGCQPRFSSTHRVAESSTGTLQYIKSQCNSALQNLHMNPDTGAADLKNLEPNVLGQTEEIHNEVEFEWLRQFWFQGKRYNKCTTFWKEAMTELEIHWKQMETMTSLVLKAIENENLTVDEKCNILKNILPPLVERQDLRHDWRERCRSKLAKMLPPDQVPCFYPYWNDDNKTMPLPFDLHNIISALQKTLEENELKL.

Residues 32 to 321 are fe2OG dioxygenase domain; it reads SSKDDTFYDL…SSTHRVAESS (290 aa). 2 residues coordinate substrate: Arg-96 and Tyr-108. Residue Asn-203 participates in 2-oxoglutarate binding. Positions 211-222 are loop L1; predicted to block binding of double-stranded DNA or RNA; the sequence is SFLKEEPYFGMG. Residues His-229 and Asp-231 each coordinate Fe cation. 229–232 contributes to the substrate binding site; it reads HHDE. Tyr-289 provides a ligand contact to 2-oxoglutarate. Position 301 (His-301) interacts with Fe cation. 2-oxoglutarate contacts are provided by residues 310 to 312, Thr-314, and Arg-316; that span reads RFS.

The protein belongs to the fto family. Monomer. May also exist as homodimer. The cofactor is Fe(2+).

It localises to the nucleus. The protein localises to the nucleus speckle. The protein resides in the cytoplasm. It catalyses the reaction a 5'-end (N(7)-methyl 5'-triphosphoguanosine)-(N(6),2'-O-dimethyladenosine) in mRNA + 2-oxoglutarate + O2 = a 5'-end (N(7)-methyl 5'-triphosphoguanosine)-(2'-O-methyladenosine) in mRNA + formaldehyde + succinate + CO2. The catalysed reaction is an N(6)-methyladenosine in mRNA + 2-oxoglutarate + O2 = an adenosine in mRNA + formaldehyde + succinate + CO2. The enzyme catalyses N(6)-methyladenosine in U6 snRNA + 2-oxoglutarate + O2 = adenosine in U6 snRNA + formaldehyde + succinate + CO2. It carries out the reaction a 5'-end (N(7)-methyl 5'-triphosphoguanosine)-(N(6),2'-O-dimethyladenosine) in U6 snRNA + 2-oxoglutarate + O2 = a 5'-end (N(7)-methyl 5'-triphosphoguanosine)-(2'-O-methyladenosine) in U6 snRNA + formaldehyde + succinate + CO2. It catalyses the reaction an N(1)-methyladenosine in tRNA + 2-oxoglutarate + O2 = an adenosine in tRNA + formaldehyde + succinate + CO2. Its activity is regulated as follows. Activated by ascorbate. Inhibited by N-oxalylglycine, fumarate and succinate. Its function is as follows. RNA demethylase that mediates oxidative demethylation of different RNA species, such as mRNAs, tRNAs and snRNAs, and acts as a regulator of fat mass, adipogenesis and energy homeostasis. Specifically demethylates N(6)-methyladenosine (m6A) RNA, the most prevalent internal modification of messenger RNA (mRNA) in higher eukaryotes. M6A demethylation by FTO affects mRNA expression and stability. Also able to demethylate m6A in U6 small nuclear RNA (snRNA). Mediates demethylation of N(6),2'-O-dimethyladenosine cap (m6A(m)), by demethylating the N(6)-methyladenosine at the second transcribed position of mRNAs and U6 snRNA. Demethylation of m6A(m) in the 5'-cap by FTO affects mRNA stability by promoting susceptibility to decapping. Also acts as a tRNA demethylase by removing N(1)-methyladenine from various tRNAs. The chain is Alpha-ketoglutarate-dependent dioxygenase FTO (fto) from Xenopus laevis (African clawed frog).